We begin with the raw amino-acid sequence, 278 residues long: Probable septum site-determining protein MinC (278 aa).

The disordered stretch occupies residues 104 to 167; that stretch reads RTQQSVDPAP…ASHTPAAPQS (64 aa).

The protein belongs to the MinC family. In terms of assembly, interacts with MinD and FtsZ.

In terms of biological role, cell division inhibitor that blocks the formation of polar Z ring septums. Rapidly oscillates between the poles of the cell to destabilize FtsZ filaments that have formed before they mature into polar Z rings. Prevents FtsZ polymerization. This chain is Probable septum site-determining protein MinC, found in Bordetella avium (strain 197N).